A 287-amino-acid chain; its full sequence is Hydroxysteroid 11-beta-dehydrogenase 1-like protein (287 aa).

An N-terminal signal peptide occupies residues 1-20 (MMKPFGKVLCAAGSLAVLLA). NADP(+)-binding positions include 41–67 (GASA…TARR), 92–93 (DM), and 119–121 (NHI). Ser170 is a binding site for substrate. The active-site Proton acceptor is the Tyr183. NADP(+)-binding positions include 183 to 187 (YSATK) and 216 to 222 (GLIDTDA).

Belongs to the short-chain dehydrogenases/reductases (SDR) family.

Its subcellular location is the secreted. The catalysed reaction is cortisone + NADPH + H(+) = cortisol + NADP(+). Functionally, unidirectional NADP(+)-dependent cortisol dehydrogenase (in vitro). In Gallus gallus (Chicken), this protein is Hydroxysteroid 11-beta-dehydrogenase 1-like protein (HSD11B1L).